Reading from the N-terminus, the 162-residue chain is ATP synthase subunit b', chloroplastic (162 aa).

A helical membrane pass occupies residues 26–46 (ATLPLQALQFILLTVLLTFIF).

This sequence belongs to the ATPase B chain family. As to quaternary structure, F-type ATPases have 2 components, F(1) - the catalytic core - and F(0) - the membrane proton channel. F(1) has five subunits: alpha(3), beta(3), gamma(1), delta(1), epsilon(1). F(0) has four main subunits: a(1), b(1), b'(1) and c(10-14). The alpha and beta chains form an alternating ring which encloses part of the gamma chain. F(1) is attached to F(0) by a central stalk formed by the gamma and epsilon chains, while a peripheral stalk is formed by the delta, b and b' chains.

The protein resides in the plastid. It localises to the chloroplast thylakoid membrane. F(1)F(0) ATP synthase produces ATP from ADP in the presence of a proton or sodium gradient. F-type ATPases consist of two structural domains, F(1) containing the extramembraneous catalytic core and F(0) containing the membrane proton channel, linked together by a central stalk and a peripheral stalk. During catalysis, ATP synthesis in the catalytic domain of F(1) is coupled via a rotary mechanism of the central stalk subunits to proton translocation. Functionally, component of the F(0) channel, it forms part of the peripheral stalk, linking F(1) to F(0). The b'-subunit is a diverged and duplicated form of b found in plants and photosynthetic bacteria. The sequence is that of ATP synthase subunit b', chloroplastic from Emiliania huxleyi (Coccolithophore).